An 86-amino-acid chain; its full sequence is Large ribosomal subunit protein bL27 (86 aa).

Residues 1–22 (MATKKAGGSSRNGRDSAGRRLG) form a disordered region.

It belongs to the bacterial ribosomal protein bL27 family.

This Rickettsia peacockii (strain Rustic) protein is Large ribosomal subunit protein bL27.